A 66-amino-acid chain; its full sequence is Large ribosomal subunit protein bL35 (66 aa).

Residues 1–15 show a composition bias toward basic residues; that stretch reads MPKMKTKSSAKKRFK. Residues 1–32 are disordered; it reads MPKMKTKSSAKKRFKMTATGKVRAGQAGKRHG.

It belongs to the bacterial ribosomal protein bL35 family.

The polypeptide is Large ribosomal subunit protein bL35 (Dinoroseobacter shibae (strain DSM 16493 / NCIMB 14021 / DFL 12)).